Consider the following 104-residue polypeptide: L-rhamnose mutarotase (104 aa).

Tyrosine 18 is a binding site for substrate. The active-site Proton donor is histidine 22. Residues tyrosine 41 and 76–77 contribute to the substrate site; that span reads WW.

It belongs to the rhamnose mutarotase family. In terms of assembly, homodimer.

The protein localises to the cytoplasm. It catalyses the reaction alpha-L-rhamnose = beta-L-rhamnose. It participates in carbohydrate metabolism; L-rhamnose metabolism. Functionally, involved in the anomeric conversion of L-rhamnose. The polypeptide is L-rhamnose mutarotase (Burkholderia ambifaria (strain ATCC BAA-244 / DSM 16087 / CCUG 44356 / LMG 19182 / AMMD) (Burkholderia cepacia (strain AMMD))).